A 569-amino-acid polypeptide reads, in one-letter code: Sulfite reductase [NADPH] hemoprotein beta-component (569 aa).

[4Fe-4S] cluster contacts are provided by Cys-433, Cys-439, Cys-478, and Cys-482. Position 482 (Cys-482) interacts with siroheme.

It belongs to the nitrite and sulfite reductase 4Fe-4S domain family. Alpha(8)-beta(8). The alpha component is a flavoprotein, the beta component is a hemoprotein. It depends on siroheme as a cofactor. The cofactor is [4Fe-4S] cluster.

It carries out the reaction hydrogen sulfide + 3 NADP(+) + 3 H2O = sulfite + 3 NADPH + 4 H(+). It participates in sulfur metabolism; hydrogen sulfide biosynthesis; hydrogen sulfide from sulfite (NADPH route): step 1/1. Functionally, component of the sulfite reductase complex that catalyzes the 6-electron reduction of sulfite to sulfide. This is one of several activities required for the biosynthesis of L-cysteine from sulfate. The chain is Sulfite reductase [NADPH] hemoprotein beta-component from Pseudoalteromonas atlantica (strain T6c / ATCC BAA-1087).